Reading from the N-terminus, the 236-residue chain is Giant extracellular hemoglobin linker 2 chain (236 aa).

Residues 66–108 form the LDL-receptor class A domain; that stretch reads NGCEPRHFQCGGSAMECISDLLTCDGSPDCANGADEDSDVCHI. Cystine bridges form between Cys68–Cys82, Cys75–Cys95, and Cys89–Cys106.

As to quaternary structure, disulfide-linked dimer of identical chains. A model is proposed for the subunit structure of the Tylorrhynchus hemoglobin, consisting of 216 polypeptides chains, 192 heme-containing chains, and 24 linker chains.

Functionally, acts as a linker for the assembly of heme-containing chains in the construction of giant hemoglobin. The polypeptide is Giant extracellular hemoglobin linker 2 chain (Tylorrhynchus heterochetus (Japanese palolo worm)).